The primary structure comprises 251 residues: Probable aquaporin TIP4-1 (251 aa).

2 helical membrane-spanning segments follow: residues 26 to 46 (LVLT…AGVP) and 57 to 77 (ALAG…TAGF). An NPA 1 motif is present at residues 85–87 (NPA). 3 helical membrane passes run 104–124 (ALYV…LRYL), 144–164 (GLVM…ATIL), and 170–190 (VPGF…IAGG). Positions 198-200 (NPA) match the NPA 2 motif. A helical membrane pass occupies residues 219 to 239 (WLGPLIGGPLAGLVYESLFLV).

This sequence belongs to the MIP/aquaporin (TC 1.A.8) family. TIP (TC 1.A.8.10) subfamily. As to expression, expressed in roots, leaves and anthers.

It localises to the vacuole membrane. Its function is as follows. Aquaporins facilitate the transport of water and small neutral solutes across cell membranes. May be involved in transport from the vacuolar compartment to the cytoplasm. In Oryza sativa subsp. japonica (Rice), this protein is Probable aquaporin TIP4-1 (TIP4-1).